We begin with the raw amino-acid sequence, 758 residues long: Long-chain-alcohol oxidase FAO1 (758 aa).

The next 2 helical transmembrane spans lie at Ile102–Leu122 and Pro155–Trp175. Cys246–Ala261 is a binding site for FAD. His689 acts as the Proton acceptor in catalysis.

It belongs to the GMC oxidoreductase family.

It localises to the membrane. It carries out the reaction a long-chain primary fatty alcohol + O2 = a long-chain fatty aldehyde + H2O2. Long-chain fatty alcohol oxidase involved in the omega-oxidation pathway of lipid degradation. This Arabidopsis thaliana (Mouse-ear cress) protein is Long-chain-alcohol oxidase FAO1 (FAO1).